Here is a 230-residue protein sequence, read N- to C-terminus: Large ribosomal subunit protein uL1 (230 aa).

This sequence belongs to the universal ribosomal protein uL1 family. As to quaternary structure, part of the 50S ribosomal subunit.

Binds directly to 23S rRNA. The L1 stalk is quite mobile in the ribosome, and is involved in E site tRNA release. In terms of biological role, protein L1 is also a translational repressor protein, it controls the translation of the L11 operon by binding to its mRNA. This chain is Large ribosomal subunit protein uL1, found in Leuconostoc citreum (strain KM20).